Reading from the N-terminus, the 631-residue chain is Arginine--tRNA ligase (631 aa).

The 'HIGH' region motif lies at 132–142 (PNIAKPLHVGH).

It belongs to the class-I aminoacyl-tRNA synthetase family.

Its subcellular location is the cytoplasm. It carries out the reaction tRNA(Arg) + L-arginine + ATP = L-arginyl-tRNA(Arg) + AMP + diphosphate. The sequence is that of Arginine--tRNA ligase from Halobacterium salinarum (strain ATCC 700922 / JCM 11081 / NRC-1) (Halobacterium halobium).